The primary structure comprises 315 residues: Mycothiol acetyltransferase (315 aa).

N-acetyltransferase domains follow at residues 8–145 (VETS…LPLD) and 163–315 (VSLR…DATA). E39 serves as a coordination point for 1D-myo-inositol 2-(L-cysteinylamino)-2-deoxy-alpha-D-glucopyranoside. Residues 81–83 (LVV) and 89–94 (HHGVGT) contribute to the acetyl-CoA site. 1D-myo-inositol 2-(L-cysteinylamino)-2-deoxy-alpha-D-glucopyranoside contacts are provided by E190, K229, and E243. 247–249 (LGV) contributes to the acetyl-CoA binding site. Y281 is a 1D-myo-inositol 2-(L-cysteinylamino)-2-deoxy-alpha-D-glucopyranoside binding site. 286–291 (NTVAIR) serves as a coordination point for acetyl-CoA.

Belongs to the acetyltransferase family. MshD subfamily. As to quaternary structure, monomer.

It carries out the reaction 1D-myo-inositol 2-(L-cysteinylamino)-2-deoxy-alpha-D-glucopyranoside + acetyl-CoA = mycothiol + CoA + H(+). Functionally, catalyzes the transfer of acetyl from acetyl-CoA to desacetylmycothiol (Cys-GlcN-Ins) to form mycothiol. The protein is Mycothiol acetyltransferase of Sanguibacter keddieii (strain ATCC 51767 / DSM 10542 / NCFB 3025 / ST-74).